Consider the following 422-residue polypeptide: MVRGSLGKLASRALSVAGKWQHQQLRRLNIHEYQGAELMGKYGINVPRGAAAGSVEEVKNTLKNVFPSEKEIVVKSQILAGGRGLGTFKSGLQGGVHIVKAEEAESLAAKMLGQILVTKQTGPQGKIVSKVYLCEKLSLVNEMYFAITLDRNTAGPLIIACSKGGTSIEDLAEKYPDMIIKVPIDVFKGITDDDAAKVVDGLAPKTADRQSSIEQIKKLYELFCKSDCTLLEINPLAETADNKLVAADAKLNFDDNAAFRQKEIFAMRDTTQEDPREVAAAKADLNYIGLDGEIGCMVNGAGLAMATMDIIKLHGGTPANFLDVGGSASEGQVVEAFKILTSDDRVKAILVNIFGGIMKCDVIASGIVNAAKQVDLKVPVVVRLEGTNVDQGKRILKESGMTLITAEDLDDAAEKAVKASVK.

The N-terminal 27 residues, 1–27 (MVRGSLGKLASRALSVAGKWQHQQLRR), are a transit peptide targeting the mitochondrion. One can recognise an ATP-grasp domain in the interval 36–279 (AELMGKYGIN…TTQEDPREVA (244 aa)). ATP-binding positions include K75, 82-84 (GRG), and E142. Mg(2+)-binding residues include N234 and D248. Substrate is bound by residues N299 and 356–358 (GIM).

The protein belongs to the succinate/malate CoA ligase beta subunit family. In terms of assembly, heterodimer of an alpha and a beta subunit. Mg(2+) serves as cofactor.

It is found in the mitochondrion. The enzyme catalyses succinate + ATP + CoA = succinyl-CoA + ADP + phosphate. Its pathway is carbohydrate metabolism; tricarboxylic acid cycle; succinate from succinyl-CoA (ligase route): step 1/1. In terms of biological role, succinyl-CoA synthetase functions in the citric acid cycle (TCA), coupling the hydrolysis of succinyl-CoA to the synthesis of ATP and thus represents the only step of substrate-level phosphorylation in the TCA. The beta subunit provides nucleotide specificity of the enzyme and binds the substrate succinate, while the binding sites for coenzyme A and phosphate are found in the alpha subunit. The protein is Succinate--CoA ligase [ADP-forming] subunit beta, mitochondrial of Oryza sativa subsp. japonica (Rice).